We begin with the raw amino-acid sequence, 129 residues long: Holo-[acyl-carrier-protein] synthase (129 aa).

2 residues coordinate Mg(2+): D8 and E58.

This sequence belongs to the P-Pant transferase superfamily. AcpS family. It depends on Mg(2+) as a cofactor.

Its subcellular location is the cytoplasm. The catalysed reaction is apo-[ACP] + CoA = holo-[ACP] + adenosine 3',5'-bisphosphate + H(+). In terms of biological role, transfers the 4'-phosphopantetheine moiety from coenzyme A to a Ser of acyl-carrier-protein. In Geobacillus kaustophilus (strain HTA426), this protein is Holo-[acyl-carrier-protein] synthase.